We begin with the raw amino-acid sequence, 451 residues long: Glutamyl-tRNA reductase (451 aa).

Substrate contacts are provided by residues 49 to 52, serine 109, 114 to 116, and glutamine 120; these read TCNR and EQQ. Catalysis depends on cysteine 50, which acts as the Nucleophile. Residue 190–195 participates in NADP(+) binding; that stretch reads GAGAMG.

The protein belongs to the glutamyl-tRNA reductase family. As to quaternary structure, homodimer.

It catalyses the reaction (S)-4-amino-5-oxopentanoate + tRNA(Glu) + NADP(+) = L-glutamyl-tRNA(Glu) + NADPH + H(+). Its pathway is porphyrin-containing compound metabolism; protoporphyrin-IX biosynthesis; 5-aminolevulinate from L-glutamyl-tRNA(Glu): step 1/2. Catalyzes the NADPH-dependent reduction of glutamyl-tRNA(Glu) to glutamate 1-semialdehyde (GSA). The chain is Glutamyl-tRNA reductase from Mycolicibacterium smegmatis (strain ATCC 700084 / mc(2)155) (Mycobacterium smegmatis).